Here is a 199-residue protein sequence, read N- to C-terminus: MAWYWWRRRRRRGWWKPRRRRWRRRRARRRGPARRHRARRRIVRHPCNGQTSSGNRVPRSVQAVDPKYVSLQLVWHSWDFRRGLFGQAGIKRMQQESDALTLSPVHRPKRPKRDTQVKEKTPEKDSDSAVQLRRLQPWIHSSQETKDEEEEIPEGPVQEQLLQQLQQQRLLRVQLESIAQEVLKIRRGHSLHPLLSSHA.

The tract at residues 96–155 (ESDALTLSPVHRPKRPKRDTQVKEKTPEKDSDSAVQLRRLQPWIHSSQETKDEEEEIPEG) is disordered. Over residues 113–127 (RDTQVKEKTPEKDSD) the composition is skewed to basic and acidic residues.

The chain is ORF1/1 protein from Torque teno virus (isolate Human/Finland/Hel32/2002) (TTV).